Reading from the N-terminus, the 530-residue chain is uncharacterized protein (530 aa).

The segment at 1–33 is disordered; that stretch reads MNNMSLKFPDIAINSSESSDDEDPSSKNEKKDG. The span at 24-33 shows a compositional bias: basic and acidic residues; sequence PSSKNEKKDG. Transmembrane regions (helical) follow at residues 83-103, 124-144, 147-167, 181-201, 211-231, 244-264, 323-343, 346-366, 375-395, 404-424, 436-456, and 471-491; these read FFILPIMCITYGMQYLDKTAV, WLSTIFYLGYMIAQYPAGYLL, FPISYFMFIAAFLWSACVLLM, FFSGVFEGCVNPAFVALTAMW, VVSWYAFNGVAIMVGALLGYG, YPFLVIGAISTAWSFVYLFFP, VTNAMSVFSALIIQGIGYSGI, TLLTLPSGAFAVAGMIASGIF, IPLAMTTSSLTIVGSIMIWKI, VVGVWLFCTISSGNAVILSLL, TVNATMFLFYSIGNIVSPQLF, and SLVSVCLFEGVLALLAFYYIF.

It belongs to the major facilitator superfamily. Allantoate permease family.

The protein localises to the endoplasmic reticulum. It is found in the membrane. This is an uncharacterized protein from Schizosaccharomyces pombe (strain 972 / ATCC 24843) (Fission yeast).